The sequence spans 369 residues: Leucine carboxyl methyltransferase 1 (369 aa).

S-adenosyl-L-methionine is bound by residues Arg84, Gly108, Asp132, Asp187 to Leu188, and Glu215.

Belongs to the methyltransferase superfamily. LCMT family.

It carries out the reaction [phosphatase 2A protein]-C-terminal L-leucine + S-adenosyl-L-methionine = [phosphatase 2A protein]-C-terminal L-leucine methyl ester + S-adenosyl-L-homocysteine. In terms of biological role, methylates the carboxyl group of the C-terminal leucine residue of protein phosphatase 2A catalytic subunits to form alpha-leucine ester residues. This chain is Leucine carboxyl methyltransferase 1 (PPM1), found in Debaryomyces hansenii (strain ATCC 36239 / CBS 767 / BCRC 21394 / JCM 1990 / NBRC 0083 / IGC 2968) (Yeast).